The sequence spans 311 residues: Putative dihydroorotate dehydrogenase A (fumarate) (311 aa).

Residues Lys-45, 69 to 73 (NSMGL), and Asn-128 each bind substrate. FMN is bound at residue 45–46 (KT). Residue Asn-128 participates in FMN binding. Cys-131 functions as the Nucleophile in the catalytic mechanism. Lys-165 and Val-193 together coordinate FMN. 194-195 (NS) is a binding site for substrate. Residues Gly-220, 248 to 249 (GG), and 270 to 271 (GT) each bind FMN.

It belongs to the dihydroorotate dehydrogenase family. Type 1 subfamily. As to quaternary structure, homodimer. Requires FMN as cofactor.

The protein resides in the cytoplasm. The enzyme catalyses (S)-dihydroorotate + fumarate = orotate + succinate. It functions in the pathway pyrimidine metabolism; UMP biosynthesis via de novo pathway. In terms of biological role, catalyzes the conversion of dihydroorotate to orotate with fumarate as the electron acceptor. The sequence is that of Putative dihydroorotate dehydrogenase A (fumarate) (pyrD) from Streptococcus pyogenes serotype M18 (strain MGAS8232).